The chain runs to 468 residues: MKINSPLEAYKYLPQTNCGECGEATCMAFASKLIDRSGKPTQCPPLVKEKKFAKKLAELERLLAPEIREITIGVGDRAVKIGGDDVLYRHKLTFFNKTKMFYDVTDTMDEAALLERTKKVADFRKFYVGRNLLLDGVAIRSVSNDPEKFAAAVKKVSEVGIPMILCSFNPAVLKAGLEVAKDKNPLIYAANKDNWKEVGELALEYNVPVVVSAFNDLDGLKTLAKTFAEAGIKDIVLDPGTYPSGQGLKDSFTNFLKIRRAGIMGDTEIAYPIMALPITAWMAGISDPVSAAYWETAMAAIFTIRYGDIMILHSLEPYATLPEVHLAETIYTDPRTPVAVDSKMYKVGEPDENSPVLFTTNFALTYYTVESDLSSNGITCWLLAVDTDGIGVEAAAAGGQLTADKVKDAFEKSGFDLKKDVTHNTVIIPGLAARLQGDLEDKLGARVLVGPMDSGRLPGWFEKNWPPK.

Positions 1-60 constitute a 4Fe-4S domain; that stretch reads MKINSPLEAYKYLPQTNCGECGEATCMAFASKLIDRSGKPTQCPPLVKEKKFAKKLAELE. Residues Cys-18, Cys-21, Cys-26, and Cys-43 each coordinate [4Fe-4S] cluster.

As to quaternary structure, heterodimer of delta and gamma chains. The ACDS complex is made up of alpha, epsilon, beta, gamma and delta chains with a probable stoichiometry of (alpha(2)epsilon(2))(4)-beta(8)-(gamma(1)delta(1))(8). It depends on corrinoid as a cofactor. [4Fe-4S] cluster serves as cofactor.

The enzyme catalyses 5,6,7,8-tetrahydrosarcinapterin + methyl-Co(III)-[corrinoid Fe-S protein] = 5-methyltetrahydrosarcinapterin + Co(I)-[corrinoid Fe-S protein] + H(+). The protein operates within one-carbon metabolism; methanogenesis from acetate. Part of a complex that catalyzes the reversible cleavage of acetyl-CoA, allowing growth on acetate as sole source of carbon and energy. The sequence is that of Acetyl-CoA decarbonylase/synthase complex subunit gamma 2 from Methanosarcina thermophila.